The sequence spans 431 residues: Neuronal pentraxin-2 (431 aa).

A signal peptide spans 1-15 (MLALLAASVALAVAA). N-linked (GlcNAc...) asparagine glycans are attached at residues N148 and N189. The 202-residue stretch at 223 to 424 (DAFKVSLPLR…GASKWPVETC (202 aa)) folds into the Pentraxin (PTX) domain. Cysteines 253 and 313 form a disulfide. 5 residues coordinate Ca(2+): N277, E355, Q356, D357, and Q367. The N-linked (GlcNAc...) asparagine glycan is linked to N393.

As to quaternary structure, homooligomer or heterooligomer (probably pentamer) with neuronal pentraxin receptor (NPTXR). Ca(2+) serves as cofactor. Brain, pancreas, liver, heart and skeletal muscle. Highest levels are seen in the testis.

Its subcellular location is the secreted. In terms of biological role, likely to play role in the modification of cellular properties that underlie long-term plasticity. Binds to agar matrix in a calcium-dependent manner. The chain is Neuronal pentraxin-2 (NPTX2) from Homo sapiens (Human).